A 998-amino-acid chain; its full sequence is RNA-directed RNA polymerase (998 aa).

Interaction with host mitochondria outer membrane stretches follow at residues 1–67 (MTLK…DKTK) and 233–250 (VRTS…RMIG). The interval 1–400 (MTLKVILGEH…KPTMPRVHWP (400 aa)) is homomultimerization. Residues 17 to 34 (LLVGIATVSGCGAVVYCI) traverse the membrane as a helical segment. The tract at residues 35 to 998 (SKFWGYGAIA…AQPQPSNNRK (964 aa)) is cytoplasmic. The tract at residues 91–282 (NGHAVSGAVR…LVYTIPQYVI (192 aa)) is capping. D692 functions as the For RdRp/TNTase activity in the catalytic mechanism. The homomultimerization stretch occupies residues 700 to 800 (IQKSINRAAK…MVLRLYGPTA (101 aa)). The interval 901-998 (AKQTRANPGT…AQPQPSNNRK (98 aa)) is disordered. Polar residues-rich tracts occupy residues 904-913 (TRANPGTSRP) and 947-961 (GKTN…TAGE). Residues 971–984 (KGPRGGKTNTRRTP) are compositionally biased toward basic residues.

It belongs to the nodaviridae RNA polymerase family. As to quaternary structure, homododecamer. Forms 2 stacked rings of 35-nm in diameter, arranged in a crown-like structure at the opening of virus-induced replication vesicles. Interacts with protein B2. Mn(2+) serves as cofactor.

It localises to the host mitochondrion outer membrane. It catalyses the reaction RNA(n) + a ribonucleoside 5'-triphosphate = RNA(n+1) + diphosphate. With respect to regulation, drastically inhibited by phosphonoacetic acid. Only slightly inhibited by gliotoxin. In terms of biological role, RNA-dependent RNA polymerase, which replicates the viral genome composed of 2 RNA segments, RNA1 and RNA2. Does not need an exogenous primer. Also possesses a terminal nucleotidyl transferase (TNTase) activity. The TNTase catalyzes the addition of nucleotide to the 3'-end of plus- and minus-stranded RNAs, probably to repair the 3'-end nucleotide loss. Forms the open necked connection to the cytosol of the virus-induced replication vesicles. Mediates viral RNA1 recruitment. This is RNA-directed RNA polymerase from Costelytra zealandica (Greater wax moth).